Consider the following 364-residue polypeptide: Cobalt-precorrin-5B C(1)-methyltransferase (364 aa).

Belongs to the CbiD family.

It carries out the reaction Co-precorrin-5B + S-adenosyl-L-methionine = Co-precorrin-6A + S-adenosyl-L-homocysteine. It functions in the pathway cofactor biosynthesis; adenosylcobalamin biosynthesis; cob(II)yrinate a,c-diamide from sirohydrochlorin (anaerobic route): step 6/10. Functionally, catalyzes the methylation of C-1 in cobalt-precorrin-5B to form cobalt-precorrin-6A. In Pseudomonas putida (strain W619), this protein is Cobalt-precorrin-5B C(1)-methyltransferase.